A 404-amino-acid chain; its full sequence is G1/S-specific cyclin-E2 (404 aa).

A disordered region spans residues 1 to 41 (MSRRSSRLQAKQHAQPNQPDSPQETQIIQAKKRKTAQDVKK). The span at 7 to 28 (RLQAKQHAQPNQPDSPQETQII) shows a compositional bias: polar residues. At Ser-21 the chain carries Phosphoserine. Lys-348 is subject to N6-lactoyllysine. Ser-383 carries the post-translational modification Phosphoserine. Residue Thr-392 is modified to Phosphothreonine.

It belongs to the cyclin family. Cyclin E subfamily. As to quaternary structure, interacts with the CDK2 (in vivo) and CDK3 (in vitro) protein kinases to form a serine/threonine kinase holoenzyme complex. The cyclin subunit imparts substrate specificity to the complex. In terms of processing, phosphorylation by CDK2 triggers its release from CDK2 and degradation via the ubiquitin proteasome pathway. Post-translationally, lactylated at Lys-348. Delactylated by SIRT3. Highest levels in adult testis, thymus and brain. Lower levels in placenta, spleen and colon.

Its subcellular location is the nucleus. In terms of biological role, essential for the control of the cell cycle at the late G1 and early S phase. In Mus musculus (Mouse), this protein is G1/S-specific cyclin-E2 (Ccne2).